We begin with the raw amino-acid sequence, 514 residues long: 2,3-bisphosphoglycerate-independent phosphoglycerate mutase (514 aa).

Residues Asp-14 and Ser-64 each coordinate Mn(2+). Ser-64 serves as the catalytic Phosphoserine intermediate. Substrate contacts are provided by residues His-125, 155 to 156 (RD), Arg-187, Arg-193, 263 to 266 (RADR), and Lys-336. Asp-403, His-407, Asp-444, His-445, and His-463 together coordinate Mn(2+).

The protein belongs to the BPG-independent phosphoglycerate mutase family. In terms of assembly, monomer. It depends on Mn(2+) as a cofactor.

It catalyses the reaction (2R)-2-phosphoglycerate = (2R)-3-phosphoglycerate. It participates in carbohydrate degradation; glycolysis; pyruvate from D-glyceraldehyde 3-phosphate: step 3/5. Its function is as follows. Catalyzes the interconversion of 2-phosphoglycerate and 3-phosphoglycerate. The sequence is that of 2,3-bisphosphoglycerate-independent phosphoglycerate mutase from Salmonella paratyphi B (strain ATCC BAA-1250 / SPB7).